A 136-amino-acid polypeptide reads, in one-letter code: Histone H3.2 (136 aa).

Residues 1-43 (MARTKQTARKSTGGKAPRKQLATKAARKSAPATGGVKKPHRFR) are disordered. Residue Lys5 is modified to N6-methylated lysine. The residue at position 10 (Lys10) is an N6-acetyllysine; alternate. Position 10 is an N6-methylated lysine; alternate (Lys10). Phosphoserine is present on Ser11. The residue at position 12 (Thr12) is a Phosphothreonine. At Lys15 the chain carries N6-acetyllysine. An N6-acetyllysine; alternate mark is found at Lys19 and Lys24. N6-methylated lysine; alternate occurs at positions 19 and 24. Lys28 carries the N6-methylated lysine modification. Ser29 carries the post-translational modification Phosphoserine. Residue Lys37 is modified to N6-methylated lysine.

It belongs to the histone H3 family. In terms of assembly, the nucleosome is a histone octamer containing two molecules each of H2A, H2B, H3 and H4 assembled in one H3-H4 heterotetramer and two H2A-H2B heterodimers. The octamer wraps approximately 147 bp of DNA. Post-translationally, acetylation is generally linked to gene activation. Can be acetylated to form H3K9ac, H3K14ac, H3K18ac and H3K23ac. H3K9ac could compete with H3K9me and prevent gene silencing. H3K9ac is restricted to euchromatin. Methylated to form mainly H3K4me, H3K9me, H3K18me, H3K23me, H3K27me and H3K36me. H3K4me1/2/3, H3K9me3, H3K27me3 and H3K36me1/2/3 are typical marks for euchromatin, whereas heterochromatic chromocenters are enriched in H3K9me1/2 and H3K27me1/2. H2BK143ub1 is probably prerequisite for H3K4me. In terms of processing, can be phosphorylated to form H3S10ph, H3T11ph and H3S28ph.

It localises to the nucleus. Its subcellular location is the chromosome. Its function is as follows. Core component of nucleosome. Nucleosomes wrap and compact DNA into chromatin, limiting DNA accessibility to the cellular machineries which require DNA as a template. Histones thereby play a central role in transcription regulation, DNA repair, DNA replication and chromosomal stability. DNA accessibility is regulated via a complex set of post-translational modifications of histones, also called histone code, and nucleosome remodeling. In Triticum aestivum (Wheat), this protein is Histone H3.2.